The following is a 399-amino-acid chain: Dof zinc finger protein DOF5.1 (399 aa).

The Dof-type zinc finger occupies 95-149; the sequence is LKCPRCDSTNTKFCYFNNYSLTQPRHFCKACRRYWTRGGALRSVPVGGGCRRNKR. Zn(2+)-binding residues include cysteine 97, cysteine 100, cysteine 122, and cysteine 125. The interval 139-176 is disordered; sequence PVGGGCRRNKRTKNSSGGGGGSTSSGNSKSQDSATSND.

In terms of tissue distribution, expressed ubiquitously, especially in the vascular tissues, except in seeds, petals and anthers. Specific to the vascular tissues in young leaves, cotyledons and flower buds. The PEAR proteins (e.g. DOF2.4, DOF5.1, DOF3.2, DOF1.1, DOF5.6 and DOF5.3) form a short-range concentration gradient that peaks at protophloem sieve elements (PSE).

It localises to the nucleus. Transcription factor that binds specifically to a 5'-AA[AG]G-3' consensus core sequence. Binds to 5'-TAAAGT-3' motif in REV promoter to triggers its transcription, thus regulating adaxial-abaxial polarity and influencing leaf axial patterning in an auxin transport- and response-dependent manner (e.g. IAA6 and IAA19 genes expression). Probably involved in early processes for vascular development. The PEAR proteins (e.g. DOF2.4, DOF5.1, DOF3.2, DOF1.1, DOF5.6 and DOF5.3) activate gene expression that promotes radial growth of protophloem sieve elements. This Arabidopsis thaliana (Mouse-ear cress) protein is Dof zinc finger protein DOF5.1.